The following is a 488-amino-acid chain: MPRTRTPLAAIVLAAGKGTRMKSNKAKVLHEVAGRPLAYYPVKRALELGASPVVVVVGHQAEAVEAALSAALPEAPLRFAVQEQQLGTAHAVLAAKRALRGYRGPVLILSGDTPLLRAETLEAVVSARRRARAAVSLATMTLEAPRGYGRVVRDARGRPARIVEEKDATEAERAVREVNAGLYCVDAELLWKKLAKVGTANAQREFYLTDLVPMAAQAGGVAGVEVPVEEASGVNDRVELSRANRVMVGRLAEAFMRAGVTIEDPARFDCDEGVEIGADAVIEPNVRLRGRTRVGARTRVGAGAVITDGVLADGVTVNPYTVISEAQVAEGAILGPFSRLRPGADIGPEAHVGNFVEVKKSRLGKGAKANHLAYLGDAEIGAGANIGAGTITCNYDGERKNPTRIGEGAFIGSDSILVAPIEIGAGAYVAAGSTLTDPVPAGALALGRARQVTKEGWVAQRQAEKQMKGTATGPASARKGRPAARRAS.

The interval 1–237 is pyrophosphorylase; sequence MPRTRTPLAA…VEEASGVNDR (237 aa). UDP-N-acetyl-alpha-D-glucosamine is bound by residues 13–16, lysine 27, glutamine 82, 87–88, 110–112, glycine 149, glutamate 164, asparagine 179, and asparagine 235; these read LAAG, GT, and SGD. Residue aspartate 112 participates in Mg(2+) binding. Asparagine 235 is a Mg(2+) binding site. Residues 238–258 form a linker region; the sequence is VELSRANRVMVGRLAEAFMRA. Positions 259-488 are N-acetyltransferase; sequence GVTIEDPARF…KGRPAARRAS (230 aa). UDP-N-acetyl-alpha-D-glucosamine is bound by residues arginine 341 and lysine 359. The Proton acceptor role is filled by histidine 371. UDP-N-acetyl-alpha-D-glucosamine contacts are provided by tyrosine 374 and asparagine 385. Acetyl-CoA is bound by residues alanine 388, 394–395, serine 413, alanine 431, and arginine 448; that span reads NY. A disordered region spans residues 459–488; the sequence is AQRQAEKQMKGTATGPASARKGRPAARRAS. The span at 478 to 488 shows a compositional bias: basic residues; sequence RKGRPAARRAS.

The protein in the N-terminal section; belongs to the N-acetylglucosamine-1-phosphate uridyltransferase family. It in the C-terminal section; belongs to the transferase hexapeptide repeat family. Homotrimer. Requires Mg(2+) as cofactor.

The protein resides in the cytoplasm. The enzyme catalyses alpha-D-glucosamine 1-phosphate + acetyl-CoA = N-acetyl-alpha-D-glucosamine 1-phosphate + CoA + H(+). It catalyses the reaction N-acetyl-alpha-D-glucosamine 1-phosphate + UTP + H(+) = UDP-N-acetyl-alpha-D-glucosamine + diphosphate. It participates in nucleotide-sugar biosynthesis; UDP-N-acetyl-alpha-D-glucosamine biosynthesis; N-acetyl-alpha-D-glucosamine 1-phosphate from alpha-D-glucosamine 6-phosphate (route II): step 2/2. Its pathway is nucleotide-sugar biosynthesis; UDP-N-acetyl-alpha-D-glucosamine biosynthesis; UDP-N-acetyl-alpha-D-glucosamine from N-acetyl-alpha-D-glucosamine 1-phosphate: step 1/1. It functions in the pathway bacterial outer membrane biogenesis; LPS lipid A biosynthesis. Its function is as follows. Catalyzes the last two sequential reactions in the de novo biosynthetic pathway for UDP-N-acetylglucosamine (UDP-GlcNAc). The C-terminal domain catalyzes the transfer of acetyl group from acetyl coenzyme A to glucosamine-1-phosphate (GlcN-1-P) to produce N-acetylglucosamine-1-phosphate (GlcNAc-1-P), which is converted into UDP-GlcNAc by the transfer of uridine 5-monophosphate (from uridine 5-triphosphate), a reaction catalyzed by the N-terminal domain. The protein is Bifunctional protein GlmU of Anaeromyxobacter sp. (strain K).